Reading from the N-terminus, the 930-residue chain is Isoleucine--tRNA ligase (930 aa).

The 'HIGH' region signature appears at 57 to 67 (PYANGNIHVGH). Position 554 (E554) interacts with L-isoleucyl-5'-AMP. Positions 595–599 (KMSKS) match the 'KMSKS' region motif. An ATP-binding site is contributed by K598. Residues C888, C891, C908, and C911 each coordinate Zn(2+).

Belongs to the class-I aminoacyl-tRNA synthetase family. IleS type 1 subfamily. In terms of assembly, monomer. Zn(2+) serves as cofactor.

It localises to the cytoplasm. The catalysed reaction is tRNA(Ile) + L-isoleucine + ATP = L-isoleucyl-tRNA(Ile) + AMP + diphosphate. Its function is as follows. Catalyzes the attachment of isoleucine to tRNA(Ile). As IleRS can inadvertently accommodate and process structurally similar amino acids such as valine, to avoid such errors it has two additional distinct tRNA(Ile)-dependent editing activities. One activity is designated as 'pretransfer' editing and involves the hydrolysis of activated Val-AMP. The other activity is designated 'posttransfer' editing and involves deacylation of mischarged Val-tRNA(Ile). This chain is Isoleucine--tRNA ligase, found in Streptococcus pneumoniae serotype 19F (strain G54).